Consider the following 284-residue polypeptide: Halorhodopsin (284 aa).

Residues 1-30 (MIETAAADILAGGMVPLEMTQTQIFEAVQS) are Extracellular-facing. The helical transmembrane segment at 31 to 56 (DTLLASSLWINIALAGLSILLFVYMG) threads the bilayer. At 57 to 62 (RNVEDP) the chain is on the cytoplasmic side. Residues 63–86 (RAQLIFVATLMVPLVSISSYTGLV) traverse the membrane as a helical segment. Over 87–110 (SGLTVSFLEMPAGHALAGQEVLTP) the chain is Extracellular. Residues 111 to 132 (WGRYLTWALSTPMILIAVGLLA) form a helical membrane-spanning segment. The Cytoplasmic segment spans residues 133 to 135 (GSN). Residues 136–159 (TTKLFTAVVADIGMCVTGLAAALT) traverse the membrane as a helical segment. The Extracellular segment spans residues 160–162 (TSS). A helical membrane pass occupies residues 163-185 (YLLRWVWYAISCAFFVVVLYILL). At 186–197 (AEWAEDAEIAGT) the chain is on the cytoplasmic side. A helical membrane pass occupies residues 198 to 221 (ADIFNTLKVLTVVLWLGYPIFWAL). Residues 222-230 (GAEGLAVLD) lie on the Extracellular side of the membrane. The chain crosses the membrane as a helical span at residues 231–259 (VAITSWAYSGMDIVAKYLFAFLLLRWVVN). At lysine 246 the chain carries N6-(retinylidene)lysine. At 260–284 (NERTVADVASGLGSGSRGGAAPADD) the chain is on the cytoplasmic side.

It belongs to the archaeal/bacterial/fungal opsin family.

The protein resides in the cell membrane. In terms of biological role, light-driven chloride pump. This chain is Halorhodopsin (hop), found in Halobacterium sp. (strain SG1).